The sequence spans 416 residues: Ribosome biogenesis protein WDR12 homolog (416 aa).

Positions 7–89 (VQVRFFTKQK…ESVVEIEYLE (83 aa)) are ubiquitin-like (UBL) domain. 7 WD repeats span residues 101–138 (VHDD…LAKV), 140–184 (GHTS…ASCV), 189–228 (GHTQ…EGGD), 259–297 (GHTQ…NKQT), 299–338 (TGSK…GQVV), 344–384 (SHQG…TPLY), and 388–416 (GHQD…LILY). Residues 226 to 245 (GGDEGENGSLSKKQKTTGVK) form a disordered region.

Belongs to the WD repeat WDR12/YTM1 family.

The protein localises to the nucleus. Its subcellular location is the nucleolus. It localises to the nucleoplasm. Required for maturation of ribosomal RNAs and formation of the large ribosomal subunit. In Nematostella vectensis (Starlet sea anemone), this protein is Ribosome biogenesis protein WDR12 homolog.